Reading from the N-terminus, the 410-residue chain is LL-diaminopimelate aminotransferase (410 aa).

Residues Tyr-15 and Gly-42 each contribute to the substrate site. Pyridoxal 5'-phosphate-binding positions include Tyr-72, 108–109 (SK), Tyr-132, Asn-187, Tyr-218, and 246–248 (SFS). Residues Lys-109, Tyr-132, and Asn-187 each contribute to the substrate site. An N6-(pyridoxal phosphate)lysine modification is found at Lys-249. Residues Arg-257 and Asn-292 each coordinate pyridoxal 5'-phosphate. Residues Asn-292 and Arg-388 each coordinate substrate.

It belongs to the class-I pyridoxal-phosphate-dependent aminotransferase family. LL-diaminopimelate aminotransferase subfamily. As to quaternary structure, homodimer. It depends on pyridoxal 5'-phosphate as a cofactor.

The enzyme catalyses (2S,6S)-2,6-diaminopimelate + 2-oxoglutarate = (S)-2,3,4,5-tetrahydrodipicolinate + L-glutamate + H2O + H(+). It participates in amino-acid biosynthesis; L-lysine biosynthesis via DAP pathway; LL-2,6-diaminopimelate from (S)-tetrahydrodipicolinate (aminotransferase route): step 1/1. Involved in the synthesis of meso-diaminopimelate (m-DAP or DL-DAP), required for both lysine and peptidoglycan biosynthesis. Catalyzes the direct conversion of tetrahydrodipicolinate to LL-diaminopimelate. The protein is LL-diaminopimelate aminotransferase of Geobacter metallireducens (strain ATCC 53774 / DSM 7210 / GS-15).